Reading from the N-terminus, the 1399-residue chain is DNA-directed RNA polymerase subunit beta' (1399 aa).

Residues C70, C72, C85, and C88 each coordinate Zn(2+). Residues D460, D462, and D464 each coordinate Mg(2+). Zn(2+) is bound by residues C814, C888, C895, and C898.

Belongs to the RNA polymerase beta' chain family. In terms of assembly, the RNAP catalytic core consists of 2 alpha, 1 beta, 1 beta' and 1 omega subunit. When a sigma factor is associated with the core the holoenzyme is formed, which can initiate transcription. It depends on Mg(2+) as a cofactor. Requires Zn(2+) as cofactor.

It catalyses the reaction RNA(n) + a ribonucleoside 5'-triphosphate = RNA(n+1) + diphosphate. Functionally, DNA-dependent RNA polymerase catalyzes the transcription of DNA into RNA using the four ribonucleoside triphosphates as substrates. This Pseudomonas entomophila (strain L48) protein is DNA-directed RNA polymerase subunit beta'.